Consider the following 121-residue polypeptide: Large ribosomal subunit protein uL14 (121 aa).

It belongs to the universal ribosomal protein uL14 family. In terms of assembly, part of the 50S ribosomal subunit. Forms a cluster with proteins L3 and L19. In the 70S ribosome, L14 and L19 interact and together make contacts with the 16S rRNA in bridges B5 and B8.

Functionally, binds to 23S rRNA. Forms part of two intersubunit bridges in the 70S ribosome. This is Large ribosomal subunit protein uL14 from Pseudoalteromonas atlantica (strain T6c / ATCC BAA-1087).